The following is a 139-amino-acid chain: Deoxyuridine 5'-triphosphate nucleotidohydrolase (139 aa).

Residues 58 to 60 (RSG), asparagine 71, 75 to 77 (LID), and methionine 85 each bind substrate.

Belongs to the dUTPase family. Mg(2+) serves as cofactor.

The catalysed reaction is dUTP + H2O = dUMP + diphosphate + H(+). It participates in pyrimidine metabolism; dUMP biosynthesis; dUMP from dCTP (dUTP route): step 2/2. In terms of biological role, this enzyme is involved in nucleotide metabolism: it produces dUMP, the immediate precursor of thymidine nucleotides and it decreases the intracellular concentration of dUTP so that uracil cannot be incorporated into DNA. This Gamma-proteobacterium EBAC31A08 protein is Deoxyuridine 5'-triphosphate nucleotidohydrolase.